We begin with the raw amino-acid sequence, 450 residues long: UDP-N-acetylmuramoylalanine--D-glutamate ligase (450 aa).

Gly115–Thr121 serves as a coordination point for ATP.

Belongs to the MurCDEF family.

It is found in the cytoplasm. It carries out the reaction UDP-N-acetyl-alpha-D-muramoyl-L-alanine + D-glutamate + ATP = UDP-N-acetyl-alpha-D-muramoyl-L-alanyl-D-glutamate + ADP + phosphate + H(+). The protein operates within cell wall biogenesis; peptidoglycan biosynthesis. Cell wall formation. Catalyzes the addition of glutamate to the nucleotide precursor UDP-N-acetylmuramoyl-L-alanine (UMA). This is UDP-N-acetylmuramoylalanine--D-glutamate ligase from Caldanaerobacter subterraneus subsp. tengcongensis (strain DSM 15242 / JCM 11007 / NBRC 100824 / MB4) (Thermoanaerobacter tengcongensis).